The chain runs to 376 residues: Arsenite methyltransferase (376 aa).

Phosphoserine occurs at positions 47 and 336. The segment covering 354–363 (SDKMKPRHAP) has biased composition (basic and acidic residues). Residues 354-376 (SDKMKPRHAPEGTGGCCGKRKNC) form a disordered region.

The protein belongs to the methyltransferase superfamily. Arsenite methyltransferase family.

It is found in the cytoplasm. The protein localises to the cytosol. It carries out the reaction arsenic triglutathione + [thioredoxin]-dithiol + S-adenosyl-L-methionine + 2 H2O = methylarsonous acid + [thioredoxin]-disulfide + 3 glutathione + S-adenosyl-L-homocysteine + H(+). It catalyses the reaction arsenic triglutathione + 2 [thioredoxin]-dithiol + 2 S-adenosyl-L-methionine + H2O = dimethylarsinous acid + 2 [thioredoxin]-disulfide + 3 glutathione + 2 S-adenosyl-L-homocysteine + 2 H(+). The catalysed reaction is arsenic triglutathione + 3 [thioredoxin]-dithiol + 3 S-adenosyl-L-methionine = trimethylarsine + 3 [thioredoxin]-disulfide + 3 glutathione + 3 S-adenosyl-L-homocysteine + 3 H(+). In terms of biological role, catalyzes the transfer of a methyl group from AdoMet to trivalent arsenicals producing methylated and dimethylated arsenicals. It methylates arsenite to form methylarsonate, Me-AsO(3)H(2), which is reduced by methylarsonate reductase to methylarsonite, Me-As(OH)2. Methylarsonite is also a substrate and it is converted into the much less toxic compound dimethylarsinate (cacodylate), Me(2)As(O)-OH. The polypeptide is Arsenite methyltransferase (As3mt) (Mus musculus (Mouse)).